A 328-amino-acid chain; its full sequence is Biotin synthase (328 aa).

Residues asparagine 48 to arginine 275 enclose the Radical SAM core domain. Positions 63, 67, and 70 each coordinate [4Fe-4S] cluster. Positions 107, 138, 198, and 270 each coordinate [2Fe-2S] cluster.

The protein belongs to the radical SAM superfamily. Biotin synthase family. Homodimer. The cofactor is [4Fe-4S] cluster. [2Fe-2S] cluster is required as a cofactor.

The catalysed reaction is (4R,5S)-dethiobiotin + (sulfur carrier)-SH + 2 reduced [2Fe-2S]-[ferredoxin] + 2 S-adenosyl-L-methionine = (sulfur carrier)-H + biotin + 2 5'-deoxyadenosine + 2 L-methionine + 2 oxidized [2Fe-2S]-[ferredoxin]. The protein operates within cofactor biosynthesis; biotin biosynthesis; biotin from 7,8-diaminononanoate: step 2/2. In terms of biological role, catalyzes the conversion of dethiobiotin (DTB) to biotin by the insertion of a sulfur atom into dethiobiotin via a radical-based mechanism. The chain is Biotin synthase from Brucella abortus (strain S19).